Here is a 543-residue protein sequence, read N- to C-terminus: Rop guanine nucleotide exchange factor 11 (543 aa).

Residues 61 to 89 are disordered; sequence QPGKCGSVDRPSLPIGGVTPNRNDKLPRV. The 362-residue stretch at 95–456 folds into the PRONE domain; that stretch reads MEALIILQAA…QLTQEPTNNA (362 aa).

Interacts with ARAC4/ROP2, ARAC3/ROP, ARAC9/ROP8, PHYA and PHYB. In terms of tissue distribution, highly expressed in elongating regions of roots and pollen grains. Expressed in flowers, and at lower levels in leaves and stems.

The protein localises to the cytoplasm. Its function is as follows. Guanine-nucleotide exchange factor (GEF) that acts as an activator of Rop (Rho of plants) GTPases by promoting the exchange of GDP for GTP. Functions as a light-signaling switch that functions in root growth and development through the activation of Rop in a phytochrome-dependent manner. May act as a negative regulator of phytochrome-mediated primary root development. This is Rop guanine nucleotide exchange factor 11 (ROPGEF11) from Arabidopsis thaliana (Mouse-ear cress).